Reading from the N-terminus, the 347-residue chain is NADH-ubiquinone oxidoreductase chain 2 (347 aa).

A run of 9 helical transmembrane segments spans residues 1–21, 59–79, 93–115, 149–169, 178–198, 201–221, 239–259, 274–294, and 325–345; these read MNPF…MIVM, YFMT…INLL, TASM…HFWV, INPN…GWGG, IMAY…IYNP, TILN…MFAL, IITT…PLTG, DSII…YFYM, and LLPT…MLVV.

It belongs to the complex I subunit 2 family. Core subunit of respiratory chain NADH dehydrogenase (Complex I) which is composed of 45 different subunits. Interacts with TMEM242.

It localises to the mitochondrion inner membrane. It carries out the reaction a ubiquinone + NADH + 5 H(+)(in) = a ubiquinol + NAD(+) + 4 H(+)(out). Functionally, core subunit of the mitochondrial membrane respiratory chain NADH dehydrogenase (Complex I) which catalyzes electron transfer from NADH through the respiratory chain, using ubiquinone as an electron acceptor. Essential for the catalytic activity and assembly of complex I. In Hippopotamus amphibius (Hippopotamus), this protein is NADH-ubiquinone oxidoreductase chain 2.